We begin with the raw amino-acid sequence, 862 residues long: Cone cGMP-specific 3',5'-cyclic phosphodiesterase subunit alpha' (862 aa).

GAF domains lie at S75–L224 and D256–V433. Residues S97, N116, D169–T172, and T176 each bind 3',5'-cyclic GMP. A PDEase domain is found at D486–Y819. The active-site Proton donor is H562. The a divalent metal cation site is built by H566, H602, D603, and D723. Positions K830–E842 are enriched in basic and acidic residues. The disordered stretch occupies residues K830–L862. C859 carries the cysteine methyl ester modification. C859 is lipidated: S-geranylgeranyl cysteine. Positions I860–L862 are cleaved as a propeptide — removed in mature form.

It belongs to the cyclic nucleotide phosphodiesterase family. Composed of two alpha' subunits that are associated with 3 smaller proteins of 11, 13, and 15 kDa. A divalent metal cation is required as a cofactor.

It localises to the cell membrane. The catalysed reaction is 3',5'-cyclic GMP + H2O = GMP + H(+). Its function is as follows. As cone-specific cGMP phosphodiesterase, it plays an essential role in light detection and cone phototransduction by rapidly decreasing intracellular levels of cGMP. The protein is Cone cGMP-specific 3',5'-cyclic phosphodiesterase subunit alpha' (PDE6C) of Gallus gallus (Chicken).